Here is a 445-residue protein sequence, read N- to C-terminus: Methionine aminopeptidase 2-2 (445 aa).

Positions 1-92 (MAAQASEDLK…RVPISQLFPN (92 aa)) are disordered. A compositionally biased stretch (low complexity) spans 18–33 (AGDSKAAAATAGQAEA). Acidic residues predominate over residues 34 to 46 (GEAEDDSDDDEVD). The span at 47 to 58 (GNAAPEGAASGA) shows a compositional bias: low complexity. Over residues 59–74 (AKKKKKRKPKKKKKGG) the composition is skewed to basic residues. His198 contacts substrate. Asp218, Asp229, and His298 together coordinate a divalent metal cation. His306 serves as a coordination point for substrate. Glu331 and Glu426 together coordinate a divalent metal cation.

It belongs to the peptidase M24A family. Methionine aminopeptidase eukaryotic type 2 subfamily. The cofactor is Co(2+). It depends on Zn(2+) as a cofactor. Mn(2+) is required as a cofactor. Requires Fe(2+) as cofactor.

Its subcellular location is the cytoplasm. The catalysed reaction is Release of N-terminal amino acids, preferentially methionine, from peptides and arylamides.. Cotranslationally removes the N-terminal methionine from nascent proteins. The N-terminal methionine is often cleaved when the second residue in the primary sequence is small and uncharged (Met-Ala-, Cys, Gly, Pro, Ser, Thr, or Val). This is Methionine aminopeptidase 2-2 from Aspergillus terreus (strain NIH 2624 / FGSC A1156).